A 480-amino-acid polypeptide reads, in one-letter code: Adenosylhomocysteinase (480 aa).

Thr63, Asp142, and Glu203 together coordinate substrate. 204 to 206 (TTT) contacts NAD(+). Substrate contacts are provided by Lys233 and Asp237. Residues Asn238, 267–272 (GYGDVG), Glu290, Asn325, 346–348 (IGH), and Asn394 each bind NAD(+).

This sequence belongs to the adenosylhomocysteinase family. NAD(+) is required as a cofactor.

It localises to the cytoplasm. The catalysed reaction is S-adenosyl-L-homocysteine + H2O = L-homocysteine + adenosine. The protein operates within amino-acid biosynthesis; L-homocysteine biosynthesis; L-homocysteine from S-adenosyl-L-homocysteine: step 1/1. In terms of biological role, may play a key role in the regulation of the intracellular concentration of adenosylhomocysteine. This is Adenosylhomocysteinase from Xanthomonas axonopodis pv. citri (strain 306).